Consider the following 405-residue polypeptide: Glucose-1-phosphate adenylyltransferase (405 aa).

Alpha-D-glucose 1-phosphate is bound by residues tyrosine 96, glycine 161, 176-177 (EK), and serine 194.

It belongs to the bacterial/plant glucose-1-phosphate adenylyltransferase family. In terms of assembly, homotetramer.

It catalyses the reaction alpha-D-glucose 1-phosphate + ATP + H(+) = ADP-alpha-D-glucose + diphosphate. It participates in glycan biosynthesis; glycogen biosynthesis. Involved in the biosynthesis of ADP-glucose, a building block required for the elongation reactions to produce glycogen. Catalyzes the reaction between ATP and alpha-D-glucose 1-phosphate (G1P) to produce pyrophosphate and ADP-Glc. In Aliivibrio fischeri (strain ATCC 700601 / ES114) (Vibrio fischeri), this protein is Glucose-1-phosphate adenylyltransferase.